A 324-amino-acid polypeptide reads, in one-letter code: Anthranilate phosphoribosyltransferase (324 aa).

5-phospho-alpha-D-ribose 1-diphosphate-binding positions include Gly75, 78–79 (GD), Thr83, 85–88 (NVST), 102–110 (KHGNFGITG), and Ser114. Gly75 contributes to the anthranilate binding site. Ser87 contributes to the Mg(2+) binding site. Asn105 lines the anthranilate pocket. Residue Arg160 participates in anthranilate binding. Mg(2+) contacts are provided by Asp216 and Glu217.

Belongs to the anthranilate phosphoribosyltransferase family. In terms of assembly, homodimer. Mg(2+) is required as a cofactor.

It catalyses the reaction N-(5-phospho-beta-D-ribosyl)anthranilate + diphosphate = 5-phospho-alpha-D-ribose 1-diphosphate + anthranilate. It functions in the pathway amino-acid biosynthesis; L-tryptophan biosynthesis; L-tryptophan from chorismate: step 2/5. Functionally, catalyzes the transfer of the phosphoribosyl group of 5-phosphorylribose-1-pyrophosphate (PRPP) to anthranilate to yield N-(5'-phosphoribosyl)-anthranilate (PRA). The chain is Anthranilate phosphoribosyltransferase from Picrophilus torridus (strain ATCC 700027 / DSM 9790 / JCM 10055 / NBRC 100828 / KAW 2/3).